The chain runs to 249 residues: Probable transcriptional regulatory protein mll3945 (249 aa).

Belongs to the TACO1 family.

The protein localises to the cytoplasm. This Mesorhizobium japonicum (strain LMG 29417 / CECT 9101 / MAFF 303099) (Mesorhizobium loti (strain MAFF 303099)) protein is Probable transcriptional regulatory protein mll3945.